The chain runs to 207 residues: Vexin (207 aa).

Residues 55–102 (LELLPHRGDRRDPGDGRRFGRLQTARPPTAHPAKASARPVGISEPKTS) form a disordered region. Basic and acidic residues predominate over residues 58–72 (LPHRGDRRDPGDGRR).

It belongs to the vexin family.

It is found in the cell membrane. The protein resides in the nucleus. Required for neurogenesis in the neural plate and retina. Strongly cooperates with neural bHLH factors to promote neurogenesis. This chain is Vexin, found in Pongo abelii (Sumatran orangutan).